The sequence spans 258 residues: Kallikrein-1 (258 aa).

The N-terminal stretch at 1–18 (MWFLVLCLALSLGGTGAA) is a signal peptide. The propeptide at 19–24 (PPIQSR) is activation peptide. One can recognise a Peptidase S1 domain in the interval 25–255 (IVGGWECSQP…YVKWIEDTIA (231 aa)). Cystine bridges form between Cys-31–Cys-170, Cys-47–Cys-63, Cys-149–Cys-216, Cys-181–Cys-195, and Cys-206–Cys-231. His-62 acts as the Charge relay system in catalysis. Ser-90 carries O-linked (GalNAc...) serine glycosylation. N-linked (GlcNAc...) asparagine glycosylation is present at Asn-99. A glycan (O-linked (GalNAc...) serine) is linked at Ser-101. Residue Asn-105 is glycosylated (N-linked (GlcNAc...) asparagine). The active-site Charge relay system is the Asp-117. Asn-161 is a glycosylation site (N-linked (GlcNAc...) asparagine). Ser-163 is a glycosylation site (O-linked (GalNAc...) serine). Ser-210 acts as the Charge relay system in catalysis.

The protein belongs to the peptidase S1 family. Kallikrein subfamily.

The catalysed reaction is Preferential cleavage of Arg-|-Xaa bonds in small molecule substrates. Highly selective action to release kallidin (lysyl-bradykinin) from kininogen involves hydrolysis of Met-|-Xaa or Leu-|-Xaa.. Glandular kallikreins cleave Met-Lys and Arg-Ser bonds in kininogen to release Lys-bradykinin. This chain is Kallikrein-1 (KLK1), found in Papio hamadryas (Hamadryas baboon).